The chain runs to 1543 residues: DNA-directed RNA polymerase subunit beta' (1543 aa).

Cys60, Cys62, Cys75, and Cys78 together coordinate Zn(2+). Asp627, Asp629, and Asp631 together coordinate Mg(2+). 4 residues coordinate Zn(2+): Cys1017, Cys1097, Cys1104, and Cys1107. Disordered stretches follow at residues 1466–1490 and 1522–1543; these read PADR…APPR and AEEG…EENV.

It belongs to the RNA polymerase beta' chain family. In terms of assembly, the RNAP catalytic core consists of 2 alpha, 1 beta, 1 beta' and 1 omega subunit. When a sigma factor is associated with the core the holoenzyme is formed, which can initiate transcription. It depends on Mg(2+) as a cofactor. Zn(2+) serves as cofactor.

The enzyme catalyses RNA(n) + a ribonucleoside 5'-triphosphate = RNA(n+1) + diphosphate. DNA-dependent RNA polymerase catalyzes the transcription of DNA into RNA using the four ribonucleoside triphosphates as substrates. The chain is DNA-directed RNA polymerase subunit beta' from Herpetosiphon aurantiacus (strain ATCC 23779 / DSM 785 / 114-95).